Reading from the N-terminus, the 227-residue chain is Deoxyribose-phosphate aldolase (227 aa).

The active-site Proton donor/acceptor is Asp-98. The active-site Schiff-base intermediate with acetaldehyde is the Lys-161. Lys-191 serves as the catalytic Proton donor/acceptor.

It belongs to the DeoC/FbaB aldolase family. DeoC type 1 subfamily.

It is found in the cytoplasm. The enzyme catalyses 2-deoxy-D-ribose 5-phosphate = D-glyceraldehyde 3-phosphate + acetaldehyde. Its pathway is carbohydrate degradation; 2-deoxy-D-ribose 1-phosphate degradation; D-glyceraldehyde 3-phosphate and acetaldehyde from 2-deoxy-alpha-D-ribose 1-phosphate: step 2/2. In terms of biological role, catalyzes a reversible aldol reaction between acetaldehyde and D-glyceraldehyde 3-phosphate to generate 2-deoxy-D-ribose 5-phosphate. In Frankia alni (strain DSM 45986 / CECT 9034 / ACN14a), this protein is Deoxyribose-phosphate aldolase.